The following is a 254-amino-acid chain: Indole-3-glycerol phosphate synthase (254 aa).

This sequence belongs to the TrpC family.

The catalysed reaction is 1-(2-carboxyphenylamino)-1-deoxy-D-ribulose 5-phosphate + H(+) = (1S,2R)-1-C-(indol-3-yl)glycerol 3-phosphate + CO2 + H2O. It functions in the pathway amino-acid biosynthesis; L-tryptophan biosynthesis; L-tryptophan from chorismate: step 4/5. The sequence is that of Indole-3-glycerol phosphate synthase from Methanopyrus kandleri (strain AV19 / DSM 6324 / JCM 9639 / NBRC 100938).